The following is a 644-amino-acid chain: Phosphomethylpyrimidine synthase (644 aa).

Substrate contacts are provided by residues Asn-236, Met-265, Tyr-294, His-330, 350-352 (SRG), 391-394 (DGLR), and Glu-430. His-434 serves as a coordination point for Zn(2+). Position 457 (Tyr-457) interacts with substrate. A Zn(2+)-binding site is contributed by His-498. [4Fe-4S] cluster-binding residues include Cys-578, Cys-581, and Cys-586. The segment at 623 to 644 (RQKSEEFKASGSELYHPAVEAE) is disordered.

Belongs to the ThiC family. Homodimer. [4Fe-4S] cluster serves as cofactor.

It catalyses the reaction 5-amino-1-(5-phospho-beta-D-ribosyl)imidazole + S-adenosyl-L-methionine = 4-amino-2-methyl-5-(phosphooxymethyl)pyrimidine + CO + 5'-deoxyadenosine + formate + L-methionine + 3 H(+). It participates in cofactor biosynthesis; thiamine diphosphate biosynthesis. In terms of biological role, catalyzes the synthesis of the hydroxymethylpyrimidine phosphate (HMP-P) moiety of thiamine from aminoimidazole ribotide (AIR) in a radical S-adenosyl-L-methionine (SAM)-dependent reaction. The protein is Phosphomethylpyrimidine synthase of Aliivibrio fischeri (strain MJ11) (Vibrio fischeri).